The sequence spans 84 residues: Small nuclear ribonucleoprotein E (84 aa).

The 72-residue stretch at 13 to 84 (INFIFKLLQQ…GDNITLIQAI (72 aa)) folds into the Sm domain.

It belongs to the snRNP Sm proteins family. In terms of assembly, component of the Sm core complex, present in spliceosomal snRNP U1, U2, U4/U6 and U5. The core complex contains smb1, smd1, smd2, smd3, sme1, smf1 and smg1 (Sm proteins B, D1, D2, D3, E, F and G, respectively), and is probably a heptameric ring structure.

The protein localises to the cytoplasm. The protein resides in the nucleus. Its function is as follows. Involved in pre-mRNA splicing. Binds and is required for the stability of snRNA U1, U2, U4 and U5 which contain a highly conserved structural motif called the Sm binding site. Involved in cap modification. In Schizosaccharomyces pombe (strain 972 / ATCC 24843) (Fission yeast), this protein is Small nuclear ribonucleoprotein E.